Reading from the N-terminus, the 178-residue chain is MTSWLCASNMKFRINKFKIEKFQIDNSDIVGKIMGLDINTCDLLTKAVVVDHECEYYWDSKVCICGKDPLTKLKQLEKVECLDFSKIAQEITGGIISSESLRDMYDYISRMLYDSETFEFPLEWDFTFANRYILVPRSYENNSQIEMIKGFCFFADELPFIKPLIVKFFTEKNPTIVY.

Belongs to the mimivirus L39/R874 family.

This is an uncharacterized protein from Acanthamoeba polyphaga (Amoeba).